Consider the following 551-residue polypeptide: Sodium-dependent high-affinity dicarboxylate transporter 2 (551 aa).

10 consecutive transmembrane segments (helical) span residues 9–29 (LIKKLLVLLGPLVAVPLLFFG), 34–54 (CLFSIIFLSTYWIGEAFPIGV), 82–102 (SIVLFMCTLIMAMAVEATGLH), 119–139 (VMLLGFMCITSFISFFVSDTA), 194–214 (FCKALILACAHASLIGGTAII), 243–263 (WMVFAIPPMFVYLLASYIILV), 347–367 (VSGVLISCILFVWPKDPFDPI), 417–437 (IFVGMSSLPLQLTVTTIIVIM), 449–469 (IFIPISLGVAESMGVHPLYLA), and 497–517 (VISMVEMIVCGFLLNIACILI).

It belongs to the SLC13A/DASS transporter (TC 2.A.47) family. NADC subfamily.

Its subcellular location is the membrane. High-affinity sodium-dicarboxylate cotransporter that accepts a range of tricarboxylic acid-cycle intermediates with 4-5 carbon atoms. There is no interaction with monocarboxylates. In Caenorhabditis elegans, this protein is Sodium-dependent high-affinity dicarboxylate transporter 2 (nac-2).